The following is a 475-amino-acid chain: Histidine--tRNA ligase (475 aa).

The protein belongs to the class-II aminoacyl-tRNA synthetase family. In terms of assembly, homodimer.

It is found in the cytoplasm. It carries out the reaction tRNA(His) + L-histidine + ATP = L-histidyl-tRNA(His) + AMP + diphosphate + H(+). The sequence is that of Histidine--tRNA ligase from Flavobacterium johnsoniae (strain ATCC 17061 / DSM 2064 / JCM 8514 / BCRC 14874 / CCUG 350202 / NBRC 14942 / NCIMB 11054 / UW101) (Cytophaga johnsonae).